The primary structure comprises 1170 residues: Cellulose synthase-like protein D2 (1170 aa).

Disordered stretches follow at residues 1-48, 54-73, and 269-295; these read MASS…RRTH, SYSRDDLDSELGNSGDMSPE, and NEVDNGGGGGGGGGLGGGDGQPAEFTS. The span at 10-24 shows a compositional bias: low complexity; it reads RHSNSSRLSRMSYSG. Positions 273–288 are enriched in gly residues; the sequence is NGGGGGGGGGLGGGDG. The next 2 membrane-spanning stretches (helical) occupy residues 311–331 and 341–361; these read VLSPYRLLILIRMAVLGLFLA and AMWLWGMSVVCELWFGLSWLL. Asp-441 is a catalytic residue. A coiled-coil region spans residues 527–551; it reads HAREEIKAMKRQREAALDDVVEAVK. The active site involves Asp-873. Transmembrane regions (helical) follow at residues 955-975, 981-1001, 1027-1047, 1070-1090, 1104-1124, and 1134-1154; these read IFLIVYCFLPALSLFSGQFIV, TFLTYLLVITLTMCMLAVLEI, LAAVLQGLLKVIAGIEISFTL, SLMIPPIVIMMVNLIAIAVGF, LLGGVFFSFWVLAHLYPFAKG, and TIVFVWSGLLAITISLLWVAI.

The protein belongs to the glycosyltransferase 2 family. Plant cellulose synthase-like D subfamily.

Its subcellular location is the golgi apparatus membrane. Thought to be a Golgi-localized beta-glycan synthase that polymerize the backbones of noncellulosic polysaccharides (hemicelluloses) of plant cell wall. The protein is Cellulose synthase-like protein D2 (CSLD2) of Oryza sativa subsp. japonica (Rice).